A 1302-amino-acid polypeptide reads, in one-letter code: Ubiquitin conjugation factor E4 B (1302 aa).

Position 1 is an N-acetylmethionine (Met-1). The segment at 1–155 is disordered; the sequence is MEELSADEIR…EPSSGPEVSE (155 aa). The span at 16–33 shows a compositional bias: low complexity; that stretch reads RLAGGQTSQPTTPLTSPQ. 2 positions are modified to phosphoserine: Ser-23 and Ser-31. Over residues 51-64 the composition is skewed to polar residues; it reads QSLGLNVHNMTPAT. The segment covering 76-99 has biased composition (low complexity); that stretch reads SQSSEGVSSLSSSPSNSLETQSQS. Phosphoserine is present on residues Ser-84, Ser-88, Ser-90, Ser-101, Ser-103, Ser-105, and Ser-124. Positions 134–147 are enriched in basic and acidic residues; the sequence is NDRREKRSLSDKEP. Ser-238 is modified (phosphoserine). The segment covering 299–327 has biased composition (polar residues); it reads AASQLAVPSTPLSPHSAASGTAAGSQPSS. The disordered stretch occupies residues 299–406; sequence AASQLAVPST…SPSLGASGGA (108 aa). A compositionally biased stretch (low complexity) spans 340-374; the sequence is ASSGVSILSSSPSPPALASSPQAVPASSSRQRPSS. Position 383 is a phosphoserine (Ser-383). Residues 384–400 show a composition bias toward low complexity; it reads PSATSRRPSSLRISPSL. Residues Ser-803 and Ser-969 each carry the phosphoserine modification. The disordered stretch occupies residues 1057–1077; that stretch reads NKEQWDQLPRDQQQARQSQLA. Low complexity predominate over residues 1066 to 1077; sequence RDQQQARQSQLA. Residues 1227–1300 form the U-box domain; the sequence is DAPDEFRDPL…QAWMREKQNS (74 aa). At Ser-1265 the chain carries Phosphoserine.

It belongs to the ubiquitin conjugation factor E4 family. In terms of assembly, interacts with VCP/p97. Interacts with STUB1/CHIP and UNC45B. Post-translationally, proteolytically cleaved by caspases during apoptosis. Cleaved efficiently at Asp-123 by caspase-6 and granzyme B. Cleaved with approximately 10-fold less efficiency at Asp-109 by caspase-3 and caspase-7. Expressed in differentiated myotubes (at protein level). Highest expression in ovary, testis, heart and skeletal muscle. Expression is low in colon, thymus and peripheral blood leukocytes. Almost undetectable in lung and spleen.

The protein resides in the cytoplasm. It is found in the nucleus. The enzyme catalyses S-ubiquitinyl-[E2 ubiquitin-conjugating enzyme]-L-cysteine + [acceptor protein]-L-lysine = [E2 ubiquitin-conjugating enzyme]-L-cysteine + N(6)-ubiquitinyl-[acceptor protein]-L-lysine.. The protein operates within protein modification; protein ubiquitination. In terms of biological role, ubiquitin-protein ligase that probably functions as an E3 ligase in conjunction with specific E1 and E2 ligases. May also function as an E4 ligase mediating the assembly of polyubiquitin chains on substrates ubiquitinated by another E3 ubiquitin ligase. May regulate myosin assembly in striated muscles together with STUB1 and VCP/p97 by targeting myosin chaperone UNC45B for proteasomal degradation. The sequence is that of Ubiquitin conjugation factor E4 B from Homo sapiens (Human).